The following is an 835-amino-acid chain: Protein translocase subunit SecA (835 aa).

ATP is bound by residues Gln-85, 103–107, and Asp-492; that span reads GEGKT. Positions 788 to 807 are disordered; the sequence is VQGEAVHPSSDGEEAKKKPV. 4 residues coordinate Zn(2+): Cys-819, Cys-821, Cys-830, and Cys-831.

Belongs to the SecA family. Monomer and homodimer. Part of the essential Sec protein translocation apparatus which comprises SecA, SecYEG and auxiliary proteins SecDF. Other proteins may also be involved. Zn(2+) serves as cofactor.

It is found in the cell membrane. The protein localises to the cytoplasm. The catalysed reaction is ATP + H2O + cellular proteinSide 1 = ADP + phosphate + cellular proteinSide 2.. In terms of biological role, part of the Sec protein translocase complex. Interacts with the SecYEG preprotein conducting channel. Has a central role in coupling the hydrolysis of ATP to the transfer of proteins into and across the cell membrane, serving as an ATP-driven molecular motor driving the stepwise translocation of polypeptide chains across the membrane. The sequence is that of Protein translocase subunit SecA from Bacillus cereus (strain G9842).